The following is a 172-amino-acid chain: Interferon tau-3 (172 aa).

2 disulfide bridges follow: Cys1–Cys99 and Cys29–Cys139.

The protein belongs to the alpha/beta interferon family. IFN-alphaII subfamily. Constitutively and exclusively expressed in the mononuclear cells of the extraembryonic trophectoderm.

The protein localises to the secreted. Paracrine hormone primarily responsible for maternal recognition of pregnancy. Interacts with endometrial receptors, probably type I interferon receptors, and blocks estrogen receptor expression, preventing the estrogen-induced increase in oxytocin receptor expression in the endometrium. This results in the suppression of the pulsatile endometrial release of the luteolytic hormone prostaglandin F2-alpha, hindering the regression of the corpus luteum (luteolysis) and therefore a return to ovarian cyclicity. This, and a possible direct effect of IFN-tau on prostaglandin synthesis, leads in turn to continued ovarian progesterone secretion, which stimulates the secretion by the endometrium of the nutrients required for the growth of the conceptus. In summary, displays particularly high antiviral and antiproliferative potency concurrently with particular weak cytotoxicity, high antiluteolytic activity and immunomodulatory properties. In contrast with other IFNs, IFN-tau is not virally inducible. The chain is Interferon tau-3 (IFNT3) from Ovis aries (Sheep).